Reading from the N-terminus, the 184-residue chain is uncharacterized protein (184 aa).

This is an uncharacterized protein from Caenorhabditis elegans.